The chain runs to 292 residues: S-adenosyl-L-methionine-dependent Diels-Alderase iccD (292 aa).

The chain crosses the membrane as a helical span at residues 240-262 (LPVVRMFYVVLLVPYLFVRLLGI).

The protein belongs to the class I-like SAM-binding methyltransferase superfamily. Erg6/SMT family. It depends on S-adenosyl-L-methionine as a cofactor.

It is found in the membrane. The catalysed reaction is 3-[(2E,4E,8S,10E,12Z)-4,8-dimethyltetradeca-2,4,10,12-tetraenoyl]-4-hydroxy-5-(4-hydroxyphenyl)-1,2-dihydropyridin-2-one = 8-epi-ilicicolin H. It functions in the pathway mycotoxin biosynthesis. In terms of biological role, S-adenosyl-l-methionine-dependent Diels-Alderase; part of the gene cluster that mediates the biosynthesis of ilicicolin H, a 4-hydroxy-2-pyridonealkaloid that has potent and broad antifungal activities by inhibiting the mitochondrial respiration chain. IccD catalyzes the Diels-Alder reaction that converts the acyclic 2-pyridone intermediate to 8-epi-ilicicolin H. The biosynthesis of ilicicolin H starts with formation of the tetramic acid by the hybrid PKS-NRPS synthetase iccA with the partnering trans-enoyl reductase iccB since iccA lacks a designated enoylreductase (ER) domain. The cytochrome P450 monooxygenase iccC then catalyzes the ring expansion of the tetramate to the acyclic 2-pyridone. The pericyclase iccD further converts the acyclic 2-pyridone into 8-epi-ilicicolin H. Finally, the epimerase iccE converts 8-epi-ilicicolin H into ilicicolin H via epimerization. IccA to iccE are sufficient for ilicicolin H biosynthesis and the roles of the remaining enzymes, iccF, iccG and iccH within the pathway have still to be determined. The polypeptide is S-adenosyl-L-methionine-dependent Diels-Alderase iccD (Talaromyces variabilis (Penicillium variabile)).